The chain runs to 336 residues: NADH-quinone oxidoreductase subunit H (336 aa).

The next 8 membrane-spanning stretches (helical) occupy residues Tyr4–Ala24, Tyr75–Ile95, Leu108–Gly128, Met154–Ile174, Ile181–Ile201, Leu233–Phe253, Phe272–Trp292, and Leu308–Val328.

This sequence belongs to the complex I subunit 1 family. As to quaternary structure, NDH-1 is composed of 14 different subunits. Subunits NuoA, H, J, K, L, M, N constitute the membrane sector of the complex.

It is found in the cell inner membrane. The catalysed reaction is a quinone + NADH + 5 H(+)(in) = a quinol + NAD(+) + 4 H(+)(out). NDH-1 shuttles electrons from NADH, via FMN and iron-sulfur (Fe-S) centers, to quinones in the respiratory chain. The immediate electron acceptor for the enzyme in this species is believed to be ubiquinone. Couples the redox reaction to proton translocation (for every two electrons transferred, four hydrogen ions are translocated across the cytoplasmic membrane), and thus conserves the redox energy in a proton gradient. This subunit may bind ubiquinone. The sequence is that of NADH-quinone oxidoreductase subunit H from Francisella tularensis subsp. mediasiatica (strain FSC147).